The following is a 1357-amino-acid chain: DNA-directed RNA polymerase subunit beta (1357 aa).

This sequence belongs to the RNA polymerase beta chain family. In terms of assembly, the RNAP catalytic core consists of 2 alpha, 1 beta, 1 beta' and 1 omega subunit. When a sigma factor is associated with the core the holoenzyme is formed, which can initiate transcription.

The catalysed reaction is RNA(n) + a ribonucleoside 5'-triphosphate = RNA(n+1) + diphosphate. DNA-dependent RNA polymerase catalyzes the transcription of DNA into RNA using the four ribonucleoside triphosphates as substrates. The chain is DNA-directed RNA polymerase subunit beta from Pseudomonas aeruginosa (strain UCBPP-PA14).